The sequence spans 252 residues: Flap endonuclease Xni (252 aa).

Aspartate 103 is a Mg(2+) binding site. Residues 159 to 248 (VLPEQLPDYW…LKGNLQQLRL (90 aa)) form the 5'-3' exonuclease domain. Positions 170, 171, 179, 181, and 184 each coordinate K(+). The interval 183–188 (GIGPKT) is interaction with DNA.

This sequence belongs to the Xni family. Requires Mg(2+) as cofactor. K(+) serves as cofactor.

In terms of biological role, has flap endonuclease activity. During DNA replication, flap endonucleases cleave the 5'-overhanging flap structure that is generated by displacement synthesis when DNA polymerase encounters the 5'-end of a downstream Okazaki fragment. The polypeptide is Flap endonuclease Xni (Photorhabdus laumondii subsp. laumondii (strain DSM 15139 / CIP 105565 / TT01) (Photorhabdus luminescens subsp. laumondii)).